The following is a 217-amino-acid chain: Glycosylphosphatidylinositol anchor biosynthesis protein 11 (217 aa).

Transmembrane regions (helical) follow at residues 45–65 (TWLT…KVFN) and 68–88 (NTAE…IFQF). N-linked (GlcNAc...) asparagine glycosylation is present at Asn-102. 4 helical membrane-spanning segments follow: residues 107–127 (AISI…IILF), 134–154 (LLWE…PAVY), 169–189 (YFIL…LDWD), and 197–217 (IPIV…GAYL).

Belongs to the PIGF family.

It localises to the endoplasmic reticulum membrane. It participates in glycolipid biosynthesis; glycosylphosphatidylinositol-anchor biosynthesis. Its function is as follows. Acts in the GPI biosynthetic pathway between GlcNAc-PI synthesis and GPI transfer to protein. This is Glycosylphosphatidylinositol anchor biosynthesis protein 11 (GPI11) from Candida glabrata (strain ATCC 2001 / BCRC 20586 / JCM 3761 / NBRC 0622 / NRRL Y-65 / CBS 138) (Yeast).